An 887-amino-acid chain; its full sequence is DNA gyrase subunit A (887 aa).

The Topo IIA-type catalytic domain occupies 35–501; sequence LPDVRDGLKP…GFENLEDEDL (467 aa). Catalysis depends on Tyr123, which acts as the O-(5'-phospho-DNA)-tyrosine intermediate. A GyrA-box motif is present at residues 528 to 534; sequence QNRGGRG. Positions 811 to 864 are disordered; sequence KEDAEDETNEDEQSTSTVSEDGTEQQREAVVNDETPGNAIHTEVIDSEENDEDG. Positions 813 to 823 are enriched in acidic residues; that stretch reads DAEDETNEDEQ.

This sequence belongs to the type II topoisomerase GyrA/ParC subunit family. In terms of assembly, heterotetramer, composed of two GyrA and two GyrB chains. In the heterotetramer, GyrA contains the active site tyrosine that forms a transient covalent intermediate with DNA, while GyrB binds cofactors and catalyzes ATP hydrolysis.

It localises to the cytoplasm. It catalyses the reaction ATP-dependent breakage, passage and rejoining of double-stranded DNA.. Functionally, a type II topoisomerase that negatively supercoils closed circular double-stranded (ds) DNA in an ATP-dependent manner to modulate DNA topology and maintain chromosomes in an underwound state. Negative supercoiling favors strand separation, and DNA replication, transcription, recombination and repair, all of which involve strand separation. Also able to catalyze the interconversion of other topological isomers of dsDNA rings, including catenanes and knotted rings. Type II topoisomerases break and join 2 DNA strands simultaneously in an ATP-dependent manner. This is DNA gyrase subunit A from Staphylococcus aureus (strain COL).